The chain runs to 728 residues: Polyribonucleotide nucleotidyltransferase (728 aa).

2 residues coordinate Mg(2+): Asp503 and Asp509. A KH domain is found at 570 to 629; it reads PRLTTIKIPSDCIGMVIGKGGETIRGITEETGAEINIADDGTVTIACTTKEGTDAALATI. The S1 motif domain occupies 639 to 713; sequence GNIYVGKVRD…GKTKFALSIK (75 aa).

It belongs to the polyribonucleotide nucleotidyltransferase family. Mg(2+) is required as a cofactor.

The protein localises to the cytoplasm. The enzyme catalyses RNA(n+1) + phosphate = RNA(n) + a ribonucleoside 5'-diphosphate. Involved in mRNA degradation. Catalyzes the phosphorolysis of single-stranded polyribonucleotides processively in the 3'- to 5'-direction. This Chlorobium chlorochromatii (strain CaD3) protein is Polyribonucleotide nucleotidyltransferase.